The chain runs to 376 residues: uncharacterized protein (376 aa).

The Lumenal portion of the chain corresponds to 1 to 280; sequence MPIPIIAHIA…RTPGFRRVVS (280 aa). NADP(+) is bound by residues isoleucine 66, aspartate 115, arginine 178, lysine 233, valine 270, and threonine 272. Lysine 233 (lowers pKa of active site Tyr) is an active-site residue. Residues 281–301 traverse the membrane as a helical segment; the sequence is FGKVWGLFLYLLLWPFWWLLL. Topologically, residues 302 to 376 are cytoplasmic; the sequence is KGTIHGAQSF…KKKKIKKSKK (75 aa).

Belongs to the short-chain dehydrogenases/reductases (SDR) family.

The protein resides in the cytoplasm. It localises to the endoplasmic reticulum membrane. Its function is as follows. May be involved in lipid metabolism. This is an uncharacterized protein from Schizosaccharomyces pombe (strain 972 / ATCC 24843) (Fission yeast).